A 138-amino-acid chain; its full sequence is Ribulose bisphosphate carboxylase small subunit (138 aa).

This sequence belongs to the RuBisCO small chain family. In terms of assembly, heterohexadecamer of 8 large and 8 small subunits.

The protein localises to the plastid. The protein resides in the chloroplast. RuBisCO catalyzes two reactions: the carboxylation of D-ribulose 1,5-bisphosphate, the primary event in carbon dioxide fixation, as well as the oxidative fragmentation of the pentose substrate in the photorespiration process. Both reactions occur simultaneously and in competition at the same active site. Although the small subunit is not catalytic it is essential for maximal activity. In Cyanidioschyzon merolae (strain NIES-3377 / 10D) (Unicellular red alga), this protein is Ribulose bisphosphate carboxylase small subunit.